Here is a 159-residue protein sequence, read N- to C-terminus: Large ribosomal subunit protein uL11 (159 aa).

It belongs to the universal ribosomal protein uL11 family. Part of the ribosomal stalk of the 50S ribosomal subunit. Interacts with L10 and the large rRNA to form the base of the stalk. L10 forms an elongated spine to which L12 dimers bind in a sequential fashion forming a multimeric L10(L12)X complex.

Its function is as follows. Forms part of the ribosomal stalk which helps the ribosome interact with GTP-bound translation factors. This is Large ribosomal subunit protein uL11 from Nitrosopumilus maritimus (strain SCM1).